Consider the following 377-residue polypeptide: Chaperone protein DnaJ (377 aa).

A J domain is found at 5–70; sequence DYYEILGVSK…QKRAAYDQYG (66 aa). The CR-type zinc finger occupies 132–210; sequence GVTKEIRIPT…CHGHGRVEKT (79 aa). Zn(2+) contacts are provided by cysteine 145, cysteine 148, cysteine 162, cysteine 165, cysteine 184, cysteine 187, cysteine 198, and cysteine 201. 4 CXXCXGXG motif repeats span residues 145–152, 162–169, 184–191, and 198–205; these read CDVCHGSG, CPTCHGAG, CPHCQGRG, and CNKCHGHG.

It belongs to the DnaJ family. As to quaternary structure, homodimer. It depends on Zn(2+) as a cofactor.

The protein localises to the cytoplasm. Participates actively in the response to hyperosmotic and heat shock by preventing the aggregation of stress-denatured proteins and by disaggregating proteins, also in an autonomous, DnaK-independent fashion. Unfolded proteins bind initially to DnaJ; upon interaction with the DnaJ-bound protein, DnaK hydrolyzes its bound ATP, resulting in the formation of a stable complex. GrpE releases ADP from DnaK; ATP binding to DnaK triggers the release of the substrate protein, thus completing the reaction cycle. Several rounds of ATP-dependent interactions between DnaJ, DnaK and GrpE are required for fully efficient folding. Also involved, together with DnaK and GrpE, in the DNA replication of plasmids through activation of initiation proteins. This chain is Chaperone protein DnaJ, found in Klebsiella pneumoniae subsp. pneumoniae (strain ATCC 700721 / MGH 78578).